The sequence spans 278 residues: MQTHYYELFFQTDKEYLDLFLDLVFSLDIDAIEEKNDGVYIRSEEDIKLIQIALQSFHQRLCEKFNTKIYFHSTLEKKENKNWIEEYKKGIQALTIDNIHIHTTWQKPKQDKINIIIDPALAFGSGHHESTYTCIEFLQKYTDGSKFCLDVGCGSGILSIIMAKLGAKVQACDTDELAIVASKENAKLNRVSFNDIWVGSVNKSLHKYDIVVANIIADILIILEKDLKEKTKEGGILILSGILNKYEDRIKDKFKDLTLLETKYKGEWLSLAYKKETK.

Residues Thr131, Gly152, Asp173, and Asn214 each coordinate S-adenosyl-L-methionine.

The protein belongs to the methyltransferase superfamily. PrmA family.

It is found in the cytoplasm. It catalyses the reaction L-lysyl-[protein] + 3 S-adenosyl-L-methionine = N(6),N(6),N(6)-trimethyl-L-lysyl-[protein] + 3 S-adenosyl-L-homocysteine + 3 H(+). In terms of biological role, methylates ribosomal protein L11. This Campylobacter lari (strain RM2100 / D67 / ATCC BAA-1060) protein is Ribosomal protein L11 methyltransferase.